The sequence spans 260 residues: Indole-3-glycerol phosphate synthase (260 aa).

The protein belongs to the TrpC family.

It catalyses the reaction 1-(2-carboxyphenylamino)-1-deoxy-D-ribulose 5-phosphate + H(+) = (1S,2R)-1-C-(indol-3-yl)glycerol 3-phosphate + CO2 + H2O. Its pathway is amino-acid biosynthesis; L-tryptophan biosynthesis; L-tryptophan from chorismate: step 4/5. This is Indole-3-glycerol phosphate synthase from Staphylococcus aureus (strain MSSA476).